Here is a 37-residue protein sequence, read N- to C-terminus: Large ribosomal subunit protein bL36 (37 aa).

The protein belongs to the bacterial ribosomal protein bL36 family.

In Acidithiobacillus ferrooxidans (strain ATCC 23270 / DSM 14882 / CIP 104768 / NCIMB 8455) (Ferrobacillus ferrooxidans (strain ATCC 23270)), this protein is Large ribosomal subunit protein bL36.